Consider the following 116-residue polypeptide: Iron-sulfur cluster insertion protein ErpA (116 aa).

Iron-sulfur cluster contacts are provided by Cys-44, Cys-108, and Cys-110.

Belongs to the HesB/IscA family. As to quaternary structure, homodimer. Requires iron-sulfur cluster as cofactor.

In terms of biological role, required for insertion of 4Fe-4S clusters for at least IspG. This is Iron-sulfur cluster insertion protein ErpA from Shewanella piezotolerans (strain WP3 / JCM 13877).